Here is a 718-residue protein sequence, read N- to C-terminus: Calpastatin (718 aa).

Disordered stretches follow at residues 1–189 (MNPA…MSST) and 210–238 (EKKT…LSSD). The segment covering 20–29 (PHSKKRHRRQ) has biased composition (basic residues). Basic and acidic residues-rich tracts occupy residues 30–61 (DAKT…EHTK) and 68–104 (HASD…KPQD). Lys-32 is covalently cross-linked (Glycyl lysine isopeptide (Lys-Gly) (interchain with G-Cter in SUMO2)). Lys-49 carries the post-translational modification N6-acetyllysine. Position 86 is a phosphoserine (Ser-86). A compositionally biased stretch (low complexity) spans 114–124 (AAGTTAAPGKA). Ser-133, Ser-222, and Ser-243 each carry phosphoserine. One copy of the Inhibitory domain 1 repeat lies at 170 to 222 (TQEDSTAYTGPEISDPMSSTYIEELGKREVTIPPKYRELLEKKTGVAGPPPDS). 2 disordered regions span residues 266–291 (ESAK…AMSD) and 320–509 (EAKR…QLPA). Ser-290 carries the post-translational modification Blocked amino end (Ser); in form erythrocyte. One copy of the Inhibitory domain 2 repeat lies at 307–359 (EPELDLSSIKEVAEAKRKEEKVEKCGEDDETVPAEYRLKPATDKDGKPLLPEP). Composition is skewed to basic and acidic residues over residues 320–331 (EAKRKEEKVEKC), 342–377 (YRLK…ELSK), and 384–399 (SNEK…EESK). Residues Ser-367, Ser-369, and Ser-376 each carry the phosphoserine modification. Low complexity predominate over residues 400 to 411 (AAVPAPVAEAVP). Ser-444 bears the Phosphoserine mark. The span at 446-496 (GRKEADPEEGKPVADKIKEKSKEEEREKLGEKEETIPPDYRLEEAKDKDGK) shows a compositional bias: basic and acidic residues. The Inhibitory domain 3 repeat unit spans residues 450–503 (ADPEEGKPVADKIKEKSKEEEREKLGEKEETIPPDYRLEEAKDKDGKPLLPSEP). Phosphoserine is present on residues Ser-520, Ser-531, Ser-579, and Ser-581. The tract at residues 543-718 (VSEVVSQSPA…KPKANEKNAS (176 aa)) is disordered. Residues 566-579 (PSNKELDDALDKLS) show a composition bias toward basic and acidic residues. Residues 587–640 (PDPDENKPMEDKVKERAKKEHKDKLGERDDTIPPEYRHLLDQGEQDKPEKPPTK) form an Inhibitory domain 4 repeat. Basic and acidic residues-rich tracts occupy residues 587 to 650 (PDPD…KPAG) and 706 to 718 (ETSK…KNAS).

It belongs to the protease inhibitor I27 (calpastatin) family.

Functionally, specific inhibition of calpain (calcium-dependent cysteine protease). Plays a key role in postmortem tenderization of meat and have been proposed to be involved in muscle protein degradation in living tissue. The polypeptide is Calpastatin (CAST) (Oryctolagus cuniculus (Rabbit)).